Here is a 349-residue protein sequence, read N- to C-terminus: Hydroxymethylglutaryl-CoA synthase (349 aa).

Residues Asp-30 and Ala-31 each coordinate (3S)-3-hydroxy-3-methylglutaryl-CoA. The active-site Proton donor/acceptor is Glu-82. Residues Cys-114 and Thr-155 each contribute to the (3S)-3-hydroxy-3-methylglutaryl-CoA site. The active-site Acyl-thioester intermediate is Cys-114. Arg-203 is a binding site for CoA. The (3S)-3-hydroxy-3-methylglutaryl-CoA site is built by Thr-205 and His-238. Catalysis depends on His-238, which acts as the Proton donor/acceptor. Lys-243 provides a ligand contact to CoA. 2 residues coordinate (3S)-3-hydroxy-3-methylglutaryl-CoA: Asn-270 and Ser-300.

Belongs to the thiolase-like superfamily. Archaeal HMG-CoA synthase family. As to quaternary structure, interacts with acetoacetyl-CoA thiolase that catalyzes the precedent step in the pathway and with a DUF35 protein. The acetoacetyl-CoA thiolase/HMG-CoA synthase complex channels the intermediate via a fused CoA-binding site, which allows for efficient coupling of the endergonic thiolase reaction with the exergonic HMGCS reaction.

The catalysed reaction is acetoacetyl-CoA + acetyl-CoA + H2O = (3S)-3-hydroxy-3-methylglutaryl-CoA + CoA + H(+). It participates in metabolic intermediate biosynthesis; (R)-mevalonate biosynthesis; (R)-mevalonate from acetyl-CoA: step 2/3. Catalyzes the condensation of acetyl-CoA with acetoacetyl-CoA to form 3-hydroxy-3-methylglutaryl-CoA (HMG-CoA). Functions in the mevalonate (MVA) pathway leading to isopentenyl diphosphate (IPP), a key precursor for the biosynthesis of isoprenoid compounds that are building blocks of archaeal membrane lipids. The sequence is that of Hydroxymethylglutaryl-CoA synthase from Methanococcus maripaludis (strain DSM 14266 / JCM 13030 / NBRC 101832 / S2 / LL).